The following is a 253-amino-acid chain: 5-oxoprolinase subunit A (253 aa).

It belongs to the LamB/PxpA family. Forms a complex composed of PxpA, PxpB and PxpC.

It catalyses the reaction 5-oxo-L-proline + ATP + 2 H2O = L-glutamate + ADP + phosphate + H(+). In terms of biological role, catalyzes the cleavage of 5-oxoproline to form L-glutamate coupled to the hydrolysis of ATP to ADP and inorganic phosphate. The chain is 5-oxoprolinase subunit A from Bacillus licheniformis (strain ATCC 14580 / DSM 13 / JCM 2505 / CCUG 7422 / NBRC 12200 / NCIMB 9375 / NCTC 10341 / NRRL NRS-1264 / Gibson 46).